The primary structure comprises 124 residues: CLAVATA3/ESR (CLE)-related protein 45 (124 aa).

The signal sequence occupies residues 1–20; sequence MLGSSTRSMFFLLVCIGLLA. N-linked (GlcNAc...) asparagine glycans are attached at residues N25 and N96. Residues 71–109 adopt a coiled-coil conformation; sequence LNKNRRVLEEVNKDKIKAEETQERKNKTEDSFKSSKRRV. Residues 87–103 are compositionally biased toward basic and acidic residues; the sequence is KAEETQERKNKTEDSFK. A disordered region spans residues 87-124; that stretch reads KAEETQERKNKTEDSFKSSKRRVRRGSDPIHNKAQPFS.

The protein belongs to the CLV3/ESR signal peptide family. Binds to SKM1 present in the pollen grain, particularly under relatively high temperature (at 30 degrees Celsius). Interacts with BAM3, especially in roots. Expressed at low levels in flowers, especially in pistils. Present in vascular tissues. In roots, confined to protophloem and sieve element precursor cells.

The protein resides in the secreted. The protein localises to the extracellular space. Functionally, extracellular signal peptide that regulates cell fate. Represses root apical meristem maintenance. Represses protophloem differentiation in a BAM3-dependent manner. BRX, BAM3, and CLE45 act together to regulate the transition of protophloem cells from proliferation to differentiation, thus impinging on postembryonic growth capacity of the root meristem; this signaling pathway requires CRN and CLV2 and involves MAKR5 for its transduction/amplification. Triggers the accumulation of MAKR5 in developing sieve elements in a BAM3-dependent manner. Prevents, in a dose-dependent manner, auxin response in the root meristem thus leading in the repression of protophloem differentiation and periclinal sieve element precursor cell division. Promotes pollen tube growth prolongation in a SKM1 and SKM2-dependent manner, especially under relatively high temperature (at 30 degrees Celsius), thus conferring tolerance against high temperature probably through the maintenance of mitochondrial activity. Alleviates mitochondrial decay pollen tube in vitro culture. The polypeptide is CLAVATA3/ESR (CLE)-related protein 45 (Arabidopsis thaliana (Mouse-ear cress)).